The chain runs to 109 residues: uncharacterized protein (109 aa).

The next 2 membrane-spanning stretches (helical) occupy residues 19 to 39 (LELV…CLIP) and 53 to 73 (YFID…FYPF).

It localises to the membrane. This is an uncharacterized protein from Saccharomyces cerevisiae (strain ATCC 204508 / S288c) (Baker's yeast).